We begin with the raw amino-acid sequence, 394 residues long: Ketoisovalerate oxidoreductase subunit VorA (394 aa).

In terms of assembly, heterotetramer of one alpha, one beta, one delta and one gamma chain.

The enzyme catalyses 3-methyl-2-oxobutanoate + 2 oxidized [2Fe-2S]-[ferredoxin] + CoA = 2-methylpropanoyl-CoA + 2 reduced [2Fe-2S]-[ferredoxin] + CO2 + H(+). The protein is Ketoisovalerate oxidoreductase subunit VorA (vorA) of Pyrococcus furiosus (strain ATCC 43587 / DSM 3638 / JCM 8422 / Vc1).